A 299-amino-acid chain; its full sequence is GTPase Era (299 aa).

Residues 4–171 form the Era-type G domain; that stretch reads KSGFVAILGR…VDILSENLGE (168 aa). A G1 region spans residues 12-19; that stretch reads GRPNVGKS. Residue 12 to 19 participates in GTP binding; sequence GRPNVGKS. Residues 38–42 are G2; that stretch reads QTTRN. The G3 stretch occupies residues 59–62; it reads DTPG. Residues 59–63 and 121–124 each bind GTP; these read DTPGI and NKID. A G4 region spans residues 121–124; that stretch reads NKID. The tract at residues 150 to 152 is G5; the sequence is ISA. The KH type-2 domain maps to 202-280; sequence TREEIPHSVA…FLETWVKVKK (79 aa).

The protein belongs to the TRAFAC class TrmE-Era-EngA-EngB-Septin-like GTPase superfamily. Era GTPase family. In terms of assembly, monomer.

Its subcellular location is the cytoplasm. It localises to the cell membrane. Its function is as follows. An essential GTPase that binds both GDP and GTP, with rapid nucleotide exchange. Plays a role in 16S rRNA processing and 30S ribosomal subunit biogenesis and possibly also in cell cycle regulation and energy metabolism. In Streptococcus pneumoniae (strain JJA), this protein is GTPase Era.